Here is a 739-residue protein sequence, read N- to C-terminus: MFTGKLQIKVCEASGLRPTDFQKRHNLTFGKLADEQLIDPYVSIDVDESHFDRATTRPKTFDPVWNEQFVHDVTNVSNINLTVFHDAALPPDDFVANCIISFEDLMQSETAVQDLWVNLEPQGKIHVIIELKNRTDKAKAEAVVEHTVAVNKEFKERAGFNRRRGAMRRRVHQVNGHKFMATFLRQPTFCSHCREFIWGIGKQGYQCQVCTLVVHKKCHLSVVSKCPGMRDEQPAKVEMVPAGQRFNVNLPHRFVVHSYKRFTFCDHCGSLLYGLIKQGLQCETCGMNVHKRCQKNVANTCGINTKQMAEILSSLGISPDKQQPRRSKYLNQQGGEDNYGASLGADGDGAPGQSFRSCALSVDSLATSTTTMTSGYNSSSCMSLAVTGSGGVGATGETRPGKCSLLDFNFIKVLGKGSFGKVMLAEKKGTDEIYAIKVLKKDAIIQDDDVDCTMTEKRILALAANHPFLTALHSCFQTPDRLFFVMEYVNGGDLMFQIQKARRFEASRAAFYAAEVTLALQFLHTHGVIYRDLKLDNILLDQEGHCKLADFGMCKEGIMNGMLTTTFCGTPDYIAPEILKEQEYGASVDWWALGVLMYEMMAGQPPFEADNEDELFDSIMHDDVLYPVWLSREAVSILKGFLTKNPEQRLGCTGDENEIRKHPFFAKLDWKELEKRNIKPPFRPKMKNPRDANNFDAEFTKEDPVLTPIGNEVVRCINQDEFAGFSFVNPKFGPERKVY.

One can recognise a C2 domain in the interval 1–117 (MFTGKLQIKV…SETAVQDLWV (117 aa)). 2 Phorbol-ester/DAG-type zinc fingers span residues 176–226 (GHKF…VSKC) and 251–301 (PHRF…ANTC). One can recognise a Protein kinase domain in the interval 408-665 (FNFIKVLGKG…ENEIRKHPFF (258 aa)). ATP-binding positions include 414–422 (LGKGSFGKV) and K437. D532 serves as the catalytic Proton acceptor. The region spanning 666-737 (AKLDWKELEK…VNPKFGPERK (72 aa)) is the AGC-kinase C-terminal domain.

Belongs to the protein kinase superfamily. AGC Ser/Thr protein kinase family. PKC subfamily.

The enzyme catalyses L-seryl-[protein] + ATP = O-phospho-L-seryl-[protein] + ADP + H(+). The catalysed reaction is L-threonyl-[protein] + ATP = O-phospho-L-threonyl-[protein] + ADP + H(+). In terms of biological role, PKC is activated by diacylglycerol which in turn phosphorylates a range of cellular proteins. PKC also serves as the receptor for phorbol esters, a class of tumor promoters. The polypeptide is Protein kinase C (Pkc98E) (Drosophila melanogaster (Fruit fly)).